The primary structure comprises 38 residues: Large ribosomal subunit protein bL36 (38 aa).

The protein belongs to the bacterial ribosomal protein bL36 family.

This Mycoplasma mobile (strain ATCC 43663 / 163K / NCTC 11711) (Mesomycoplasma mobile) protein is Large ribosomal subunit protein bL36.